The primary structure comprises 418 residues: Secreted beta-glucosidase SUN41 (418 aa).

The signal sequence occupies residues 1–23 (MRFSQATVLAFAALSLAAPAFEA). The segment covering 81-97 (SEETSSTSTSISSTTTI) has biased composition (low complexity). Positions 81 to 150 (SEETSSTSTS…SGSTNGIEGD (70 aa)) are disordered. Residue Asn-100 is glycosylated (N-linked (GlcNAc...) asparagine). Polar residues predominate over residues 112–126 (SLPSGTIKPSSFATE). Over residues 127–136 (SQSQSQSSST) the composition is skewed to low complexity.

It belongs to the SUN family. In terms of processing, predicted to be a substrate for cleavage by KEX2.

Its subcellular location is the secreted. It localises to the cell wall. Functionally, cell surface beta-glucosidase involved in cytokinesis, cell wall biogenesis, adhesion to host tissue, and biofilm formation; thus playing an important role in the host-pathogen interaction. Has hydrolytic activity on linear (1-&gt;3)-beta-D-glucans such as laminaribiose and other laminarioligosaccharides. This is Secreted beta-glucosidase SUN41 from Candida albicans (strain SC5314 / ATCC MYA-2876) (Yeast).